Here is a 664-residue protein sequence, read N- to C-terminus: Probable urea active transporter 1 (664 aa).

Helical transmembrane passes span 9 to 29 (SVGYGIVVGLGLGFAALMIFV), 56 to 76 (GLVASAVVSSWTWASTLLTSA), 86 to 106 (GAFWYASGACVQILLFTVLAI), 132 to 152 (GVFLVFAYITNILVMAMLLCG), 165 to 185 (TVAVCFLLPVGVIIYTMFGGI), 189 to 209 (FLTDYIHTVIILVILIMFSLA), 252 to 272 (GAIFFIINLAGNFGTVFVDNG), 290 to 310 (ILGGLAWFAIPWLAATTMGLV), 327 to 347 (MSDLEVSEGLVLPYAAIALMG), 353 to 373 (ATLLLVFMAVTSAASAELIAV), 395 to 415 (LLYTGHASLIVFGFAMSGFAT), 428 to 448 (YLLMGVLVCPAVVPATCVMLF), 454 to 474 (IAVTVSPVLGIISSIITWLVV), 496 to 516 (AGNVVGLLSPALYILILSIIF), 555 to 575 (VAALIITAAFIILWPWPMYGT), and 587 to 607 (WVVVGLIWIFFTVFAVGIFPL).

The protein belongs to the sodium:solute symporter (SSF) (TC 2.A.21) family.

The protein localises to the membrane. In terms of biological role, involved in active transport of urea. The protein is Probable urea active transporter 1 (dur3-1) of Schizosaccharomyces pombe (strain 972 / ATCC 24843) (Fission yeast).